We begin with the raw amino-acid sequence, 125 residues long: Small ribosomal subunit protein uS12 (125 aa).

The segment at 1–28 is disordered; that stretch reads MPTISQLIGSERKRLTRKTKSPALKSCP. Aspartate 89 is subject to 3-methylthioaspartic acid. Positions 104–125 are disordered; sequence TAGVKDRRQSRSKYGAKAPKND.

The protein belongs to the universal ribosomal protein uS12 family. Part of the 30S ribosomal subunit. Contacts proteins S8 and S17. May interact with IF1 in the 30S initiation complex.

With S4 and S5 plays an important role in translational accuracy. In terms of biological role, interacts with and stabilizes bases of the 16S rRNA that are involved in tRNA selection in the A site and with the mRNA backbone. Located at the interface of the 30S and 50S subunits, it traverses the body of the 30S subunit contacting proteins on the other side and probably holding the rRNA structure together. The combined cluster of proteins S8, S12 and S17 appears to hold together the shoulder and platform of the 30S subunit. This is Small ribosomal subunit protein uS12 from Prochlorococcus marinus subsp. pastoris (strain CCMP1986 / NIES-2087 / MED4).